A 298-amino-acid polypeptide reads, in one-letter code: Transcription factor RHD6 (298 aa).

Disordered regions lie at residues 1 to 58 and 157 to 213; these read MALV…SDHQ and TGSR…AKNR. The segment covering 15–27 has biased composition (low complexity); it reads SKQNSSSSEDLSS. Polar residues-rich tracts occupy residues 157 to 168 and 177 to 190; these read TGSRNESLSPKS and GESTQPSKKLSSGV. Low complexity predominate over residues 191–205; sequence TGKTKPKPTTSPKDP. Positions 201–214 are basic motif; the sequence is SPKDPQSLAAKNRR. In terms of domain architecture, bHLH spans 201–250; that stretch reads SPKDPQSLAAKNRRERISERLKILQELVPNGTKVDLVTMLEKAISYVKFL. A helix-loop-helix motif region spans residues 215–250; that stretch reads ERISERLKILQELVPNGTKVDLVTMLEKAISYVKFL.

In terms of assembly, homodimer. Forms heterodimers with RSL1. Interacts with TIFY10B/JAZ2, TIFY6A/JAZ4, TIFY5A/JAZ8, TIFY7/JAZ9 and TIFY9/JAZ10. As to expression, expressed constitutively in flowers. Expressed in root epidermal hair cells.

The protein resides in the nucleus. Transcription factor that is specifically required for the development of root hairs. Acts with RSL1 to positively regulate root hair development. Acts downstream of genes that regulate epidermal pattern formation, such as GL2. Targets directly RSL4, another transcription factor involved in the regulation of root hair elongation. Acts with RSL1 as transcription factor that integrates a jasmonate (JA) signaling pathway that stimulates root hair growth. The chain is Transcription factor RHD6 from Arabidopsis thaliana (Mouse-ear cress).